The chain runs to 254 residues: Imidazole glycerol phosphate synthase subunit HisF (254 aa).

Catalysis depends on residues D12 and D131.

Belongs to the HisA/HisF family. Heterodimer of HisH and HisF.

The protein resides in the cytoplasm. It carries out the reaction 5-[(5-phospho-1-deoxy-D-ribulos-1-ylimino)methylamino]-1-(5-phospho-beta-D-ribosyl)imidazole-4-carboxamide + L-glutamine = D-erythro-1-(imidazol-4-yl)glycerol 3-phosphate + 5-amino-1-(5-phospho-beta-D-ribosyl)imidazole-4-carboxamide + L-glutamate + H(+). Its pathway is amino-acid biosynthesis; L-histidine biosynthesis; L-histidine from 5-phospho-alpha-D-ribose 1-diphosphate: step 5/9. Its function is as follows. IGPS catalyzes the conversion of PRFAR and glutamine to IGP, AICAR and glutamate. The HisF subunit catalyzes the cyclization activity that produces IGP and AICAR from PRFAR using the ammonia provided by the HisH subunit. This chain is Imidazole glycerol phosphate synthase subunit HisF, found in Herminiimonas arsenicoxydans.